The primary structure comprises 515 residues: Galactose/methyl galactoside import ATP-binding protein MglA (515 aa).

ABC transporter domains lie at 8–243 (LEMR…VGRE) and 254–499 (IPKE…AKYL). Residue 40–47 (GENGAGKS) coordinates ATP.

This sequence belongs to the ABC transporter superfamily. Galactose/methyl galactoside importer (TC 3.A.1.2.3) family. The complex is composed of one ATP-binding protein (MglA), two transmembrane proteins (MglC) and a solute-binding protein (MglB).

It localises to the cell membrane. It carries out the reaction D-galactose(out) + ATP + H2O = D-galactose(in) + ADP + phosphate + H(+). The catalysed reaction is methyl beta-D-galactoside(out) + ATP + H2O = methyl beta-D-galactoside(in) + ADP + phosphate + H(+). In terms of biological role, part of the ABC transporter complex MglABC involved in galactose/methyl galactoside import. Responsible for energy coupling to the transport system. This chain is Galactose/methyl galactoside import ATP-binding protein MglA, found in Clostridium perfringens (strain SM101 / Type A).